A 308-amino-acid chain; its full sequence is Thymidylate synthase (308 aa).

Residues Arg26 and 170-171 (RR) each bind dUMP. Residue Cys190 is the Nucleophile of the active site. Residues 210 to 213 (RSCD), Asn221, and 251 to 253 (HVY) contribute to the dUMP site. A (6R)-5,10-methylene-5,6,7,8-tetrahydrofolate-binding site is contributed by Asp213. A (6R)-5,10-methylene-5,6,7,8-tetrahydrofolate-binding site is contributed by Ala307.

It belongs to the thymidylate synthase family. Bacterial-type ThyA subfamily. As to quaternary structure, homodimer.

The protein localises to the cytoplasm. It catalyses the reaction dUMP + (6R)-5,10-methylene-5,6,7,8-tetrahydrofolate = 7,8-dihydrofolate + dTMP. It functions in the pathway pyrimidine metabolism; dTTP biosynthesis. Functionally, catalyzes the reductive methylation of 2'-deoxyuridine-5'-monophosphate (dUMP) to 2'-deoxythymidine-5'-monophosphate (dTMP) while utilizing 5,10-methylenetetrahydrofolate (mTHF) as the methyl donor and reductant in the reaction, yielding dihydrofolate (DHF) as a by-product. This enzymatic reaction provides an intracellular de novo source of dTMP, an essential precursor for DNA biosynthesis. In Rhizorhabdus wittichii (strain DSM 6014 / CCUG 31198 / JCM 15750 / NBRC 105917 / EY 4224 / RW1) (Sphingomonas wittichii), this protein is Thymidylate synthase.